Reading from the N-terminus, the 283-residue chain is Formamidopyrimidine-DNA glycosylase (283 aa).

Pro2 functions as the Schiff-base intermediate with DNA in the catalytic mechanism. Glu3 functions as the Proton donor in the catalytic mechanism. Lys60 serves as the catalytic Proton donor; for beta-elimination activity. DNA-binding residues include His95, Arg114, and Arg159. Residues 244–278 (WVYGRHNQPCRVCGTPIERIKLGGRSSHFCPQCQP) form an FPG-type zinc finger. Arg268 serves as the catalytic Proton donor; for delta-elimination activity.

It belongs to the FPG family. As to quaternary structure, monomer. It depends on Zn(2+) as a cofactor.

The catalysed reaction is Hydrolysis of DNA containing ring-opened 7-methylguanine residues, releasing 2,6-diamino-4-hydroxy-5-(N-methyl)formamidopyrimidine.. It carries out the reaction 2'-deoxyribonucleotide-(2'-deoxyribose 5'-phosphate)-2'-deoxyribonucleotide-DNA = a 3'-end 2'-deoxyribonucleotide-(2,3-dehydro-2,3-deoxyribose 5'-phosphate)-DNA + a 5'-end 5'-phospho-2'-deoxyribonucleoside-DNA + H(+). Involved in base excision repair of DNA damaged by oxidation or by mutagenic agents. Acts as a DNA glycosylase that recognizes and removes damaged bases. Has a preference for oxidized purines, such as 7,8-dihydro-8-oxoguanine (8-oxoG). Has AP (apurinic/apyrimidinic) lyase activity and introduces nicks in the DNA strand. Cleaves the DNA backbone by beta-delta elimination to generate a single-strand break at the site of the removed base with both 3'- and 5'-phosphates. The polypeptide is Formamidopyrimidine-DNA glycosylase (Crocosphaera subtropica (strain ATCC 51142 / BH68) (Cyanothece sp. (strain ATCC 51142))).